A 130-amino-acid chain; its full sequence is Small ribosomal subunit protein uS9 (130 aa).

The protein belongs to the universal ribosomal protein uS9 family.

The protein is Small ribosomal subunit protein uS9 of Marinobacter nauticus (strain ATCC 700491 / DSM 11845 / VT8) (Marinobacter aquaeolei).